A 390-amino-acid chain; its full sequence is Probable tRNA sulfurtransferase (390 aa).

Positions 60–162 constitute a THUMP domain; the sequence is KQIIDDLKEV…YDCAIVYGHK (103 aa). ATP contacts are provided by residues 180 to 181, 205 to 206, arginine 264, glycine 286, and glutamine 295; these read LL and TF.

Belongs to the ThiI family.

It is found in the cytoplasm. It catalyses the reaction [ThiI sulfur-carrier protein]-S-sulfanyl-L-cysteine + a uridine in tRNA + 2 reduced [2Fe-2S]-[ferredoxin] + ATP + H(+) = [ThiI sulfur-carrier protein]-L-cysteine + a 4-thiouridine in tRNA + 2 oxidized [2Fe-2S]-[ferredoxin] + AMP + diphosphate. The enzyme catalyses [ThiS sulfur-carrier protein]-C-terminal Gly-Gly-AMP + S-sulfanyl-L-cysteinyl-[cysteine desulfurase] + AH2 = [ThiS sulfur-carrier protein]-C-terminal-Gly-aminoethanethioate + L-cysteinyl-[cysteine desulfurase] + A + AMP + 2 H(+). It participates in cofactor biosynthesis; thiamine diphosphate biosynthesis. Catalyzes the ATP-dependent transfer of a sulfur to tRNA to produce 4-thiouridine in position 8 of tRNAs, which functions as a near-UV photosensor. Also catalyzes the transfer of sulfur to the sulfur carrier protein ThiS, forming ThiS-thiocarboxylate. This is a step in the synthesis of thiazole, in the thiamine biosynthesis pathway. The sulfur is donated as persulfide by IscS. This chain is Probable tRNA sulfurtransferase, found in Ureaplasma parvum serovar 3 (strain ATCC 27815 / 27 / NCTC 11736).